The sequence spans 174 residues: Rubredoxin-2 (174 aa).

Residues 1–53 (MAKYQCPDCEYIYDEVAGHPHEGFPPGTSWETIPEEWACPDCAVRDKADFVVI) enclose the Rubredoxin-like 1 domain. Residues C6, C9, C39, and C42 each coordinate Fe cation. A compositionally biased stretch (low complexity) spans 56-65 (GSASPASGAA). Residues 56–115 (GSASPASGAATPEVRTATTPPKAEASPQKSTGASTPSANNKAKAKAKAKPARAKSSKDST) are disordered. Residues 97-109 (AKAKAKAKPARAK) are compositionally biased toward basic residues. A Rubredoxin-like 2 domain is found at 121 to 172 (FRKWICITCGHIYDEALGDETEGFAPGTLFEDIPDDWCCPDCGATKEDYVLH). Residues C126, C129, C159, and C162 each contribute to the Fe cation site.

The protein belongs to the rubredoxin family. Fe(3+) serves as cofactor.

It is found in the cytoplasm. It participates in hydrocarbon metabolism; alkane degradation. Functionally, involved in the hydrocarbon hydroxylating system, which transfers electrons from NADH to rubredoxin reductase and then through rubredoxin to alkane 1 monooxygenase. This Alcanivorax borkumensis (strain ATCC 700651 / DSM 11573 / NCIMB 13689 / SK2) protein is Rubredoxin-2 (alkG).